The primary structure comprises 566 residues: CTP synthase (566 aa).

The segment at 1 to 265 (MTKYVFVTGG…DEIVCHKLNL (265 aa)) is amidoligase domain. Ser13 contacts CTP. UTP is bound at residue Ser13. Residues 14–19 (SLGKGI) and Asp71 each bind ATP. Residues Asp71 and Glu139 each contribute to the Mg(2+) site. Residues 146–148 (DIE), 186–191 (KTKPTQ), and Lys222 contribute to the CTP site. UTP is bound by residues 186–191 (KTKPTQ) and Lys222. A Glutamine amidotransferase type-1 domain is found at 290–543 (EIALVGKYVD…IEAAAVFADK (254 aa)). Gly351 is an L-glutamine binding site. The active-site Nucleophile; for glutamine hydrolysis is Cys378. Residues 379 to 382 (LGMQ), Glu402, and Arg469 contribute to the L-glutamine site. Active-site residues include His516 and Glu518. Positions 545-566 (PSSEGAISADKPERTTTGAYIQ) are disordered.

The protein belongs to the CTP synthase family. Homotetramer.

It carries out the reaction UTP + L-glutamine + ATP + H2O = CTP + L-glutamate + ADP + phosphate + 2 H(+). The enzyme catalyses L-glutamine + H2O = L-glutamate + NH4(+). It catalyses the reaction UTP + NH4(+) + ATP = CTP + ADP + phosphate + 2 H(+). It functions in the pathway pyrimidine metabolism; CTP biosynthesis via de novo pathway; CTP from UDP: step 2/2. Its activity is regulated as follows. Allosterically activated by GTP, when glutamine is the substrate; GTP has no effect on the reaction when ammonia is the substrate. The allosteric effector GTP functions by stabilizing the protein conformation that binds the tetrahedral intermediate(s) formed during glutamine hydrolysis. Inhibited by the product CTP, via allosteric rather than competitive inhibition. Catalyzes the ATP-dependent amination of UTP to CTP with either L-glutamine or ammonia as the source of nitrogen. Regulates intracellular CTP levels through interactions with the four ribonucleotide triphosphates. This is CTP synthase from Nitrosospira multiformis (strain ATCC 25196 / NCIMB 11849 / C 71).